Reading from the N-terminus, the 743-residue chain is Type VI secretion system spike protein VgrG1 (743 aa).

It belongs to the VgrG protein family.

The protein resides in the secreted. It catalyses the reaction L-arginyl-[protein] + NAD(+) = N(omega)-(ADP-D-ribosyl)-L-arginyl-[protein] + nicotinamide + H(+). In terms of biological role, part of the type VI secretion system specialized secretion system, which delivers several virulence factors in both prokaryotic and eukaryotic cells during infection. Acts directly as an secreted effector with an actin ADP-ribosyltransferase activity that disrupts the host actin cytoskeleton, leading to a decrease in host cell viability and an increase in apoptosis. In Aeromonas hydrophila subsp. hydrophila (strain ATCC 7966 / DSM 30187 / BCRC 13018 / CCUG 14551 / JCM 1027 / KCTC 2358 / NCIMB 9240 / NCTC 8049), this protein is Type VI secretion system spike protein VgrG1 (vgrG1).